The primary structure comprises 670 residues: Segment polarity protein dishevelled homolog DVL-1 (670 aa).

The 85-residue stretch at 1 to 85 (MAETKIIYHM…RVVSWLVLAE (85 aa)) folds into the DIX domain. The tract at residues 89–237 (SDAGSQGTDS…LRQADRASSF (149 aa)) is disordered. Over residues 142–151 (SHRRERARRR) the composition is skewed to basic residues. Residues 152-171 (NREEAARTNGHPRGDRRRDV) show a composition bias toward basic and acidic residues. Residues 176–192 (DSASTALSSELESSSFV) show a composition bias toward low complexity. At serine 194 the chain carries Phosphoserine. Over residues 200-214 (TSRLSSSTEQSTSSR) the composition is skewed to low complexity. Residues 215–228 (LIRKHKRRRRKQRL) are compositionally biased toward basic residues. A PDZ domain is found at 251–323 (TVTLNMERHH…NDDAVRVLRE (73 aa)). Residues 400-474 (PDSGLEIRDR…SEQCYYVFGD (75 aa)) form the DEP domain. A disordered region spans residues 518–642 (PGPPPCFPPA…PGGPPVRELA (125 aa)). Residues 526–555 (PAYQDPGFSYGSGSTGSQQSEGSKSSGSTR) show a composition bias toward low complexity. A compositionally biased stretch (polar residues) spans 600 to 611 (SRGSSPRSQASA).

Belongs to the DSH family. Interacts with CXXC4. Interacts (via PDZ domain) with NXN. Interacts with BRD7 and INVS. Interacts (via PDZ domain) with VANGL1 and VANGL2 (via C-terminus). Interacts with ARRB1; the interaction is enhanced by phosphorylation of DVL1. Interacts with CYLD. Interacts (via PDZ domain) with RYK. Self-associates (via DIX domain) and forms higher homooligomers. Interacts (via PDZ domain) with DACT1 and FZD7, where DACT1 and FZD7 compete for the same binding site. Interacts (via DEP domain) with MUSK; the interaction is direct and mediates the formation a DVL1, MUSK and PAK1 ternary complex involved in AChR clustering. Interacts (via PDZ domain) with TMEM88. Interacts with DCDC2. Interacts with FOXK2. Interacts with PKD1 (via extracellular domain). Interacts (via PDZ domain) with CCDC88C/DAPLE; competes with CCDC88C for binding to frizzled receptor FZD7 and dissociates from CCDC88C following initiation of non-canonical Wnt signaling when CCDC88C displaces DVL1 from ligand-activated FZD7. Ubiquitinated; undergoes both 'Lys-48'-linked ubiquitination, leading to its subsequent degradation by the ubiquitin-proteasome pathway, and 'Lys-63'-linked ubiquitination. The interaction with INVS is required for ubiquitination. Deubiquitinated by CYLD, which acts on 'Lys-63'-linked ubiquitin chains.

The protein resides in the cell membrane. The protein localises to the cytoplasm. It localises to the cytosol. Its subcellular location is the cytoplasmic vesicle. Participates in Wnt signaling by binding to the cytoplasmic C-terminus of frizzled family members and transducing the Wnt signal to down-stream effectors. Plays a role both in canonical and non-canonical Wnt signaling. Plays a role in the signal transduction pathways mediated by multiple Wnt genes. Required for LEF1 activation upon WNT1 and WNT3A signaling. DVL1 and PAK1 form a ternary complex with MUSK which is important for MUSK-dependent regulation of AChR clustering during the formation of the neuromuscular junction (NMJ). This chain is Segment polarity protein dishevelled homolog DVL-1 (DVL1), found in Pan troglodytes (Chimpanzee).